We begin with the raw amino-acid sequence, 107 residues long: Rhodocoxin (107 aa).

Positions 2-106 (PTVTYVHPDG…GLIVRLPEEQ (105 aa)) constitute a 2Fe-2S ferredoxin-type domain. [2Fe-2S] cluster-binding residues include C40, C46, C49, and C87.

It belongs to the adrenodoxin/putidaredoxin family. [2Fe-2S] cluster is required as a cofactor.

Ferredoxin-type protein which transfers electrons from rhodocoxin reductase to cytochrome CYP116 (ThcB), which is involved in the degradation of thiocarbamate herbicides. The polypeptide is Rhodocoxin (thcC) (Rhodococcus erythropolis (Arthrobacter picolinophilus)).